The following is a 293-amino-acid chain: Elongation factor Ts (293 aa).

The interval 80 to 83 (TDFV) is involved in Mg(2+) ion dislocation from EF-Tu.

Belongs to the EF-Ts family.

Its subcellular location is the cytoplasm. In terms of biological role, associates with the EF-Tu.GDP complex and induces the exchange of GDP to GTP. It remains bound to the aminoacyl-tRNA.EF-Tu.GTP complex up to the GTP hydrolysis stage on the ribosome. This chain is Elongation factor Ts, found in Burkholderia lata (strain ATCC 17760 / DSM 23089 / LMG 22485 / NCIMB 9086 / R18194 / 383).